The sequence spans 626 residues: uncharacterized protein (626 aa).

The chain crosses the membrane as a helical span at residues A103 to A123. Residues F200–L618 form the Protein kinase domain. Residues V206–V214 and K311 contribute to the ATP site. D445 (proton acceptor) is an active-site residue.

Belongs to the protein kinase superfamily. ADCK protein kinase family.

Its subcellular location is the mitochondrion. The protein localises to the membrane. Its function is as follows. The function of this protein is not yet clear. It is not known if it has protein kinase activity and what type of substrate it would phosphorylate (Ser, Thr or Tyr). Involved in the mitochondrial import of CoQ precursors, plays a role in muscle mitochondrial function and fatty acid beta-oxidation. This is an uncharacterized protein from Homo sapiens (Human).